A 286-amino-acid chain; its full sequence is Shikimate dehydrogenase (NADP(+)) (286 aa).

Residues 20-22 and Thr-67 each bind shikimate; that span reads SLS. Lys-71 acts as the Proton acceptor in catalysis. Asn-92 and Asp-107 together coordinate shikimate. NADP(+) contacts are provided by residues 132-136 and Met-228; that span reads GAGGA. Residue Tyr-230 participates in shikimate binding. Gly-251 contacts NADP(+).

It belongs to the shikimate dehydrogenase family. As to quaternary structure, homodimer.

It carries out the reaction shikimate + NADP(+) = 3-dehydroshikimate + NADPH + H(+). The protein operates within metabolic intermediate biosynthesis; chorismate biosynthesis; chorismate from D-erythrose 4-phosphate and phosphoenolpyruvate: step 4/7. Involved in the biosynthesis of the chorismate, which leads to the biosynthesis of aromatic amino acids. Catalyzes the reversible NADPH linked reduction of 3-dehydroshikimate (DHSA) to yield shikimate (SA). This Geobacter sulfurreducens (strain ATCC 51573 / DSM 12127 / PCA) protein is Shikimate dehydrogenase (NADP(+)).